The sequence spans 259 residues: Phosphate import ATP-binding protein PstB (259 aa).

The region spanning 13–254 is the ABC transporter domain; it reads IQVRDLNFYY…PAQRQTEDYI (242 aa). ATP is bound at residue 45–52; that stretch reads GPSGCGKS.

Belongs to the ABC transporter superfamily. Phosphate importer (TC 3.A.1.7) family. The complex is composed of two ATP-binding proteins (PstB), two transmembrane proteins (PstC and PstA) and a solute-binding protein (PstS).

The protein resides in the cell inner membrane. The catalysed reaction is phosphate(out) + ATP + H2O = ADP + 2 phosphate(in) + H(+). Part of the ABC transporter complex PstSACB involved in phosphate import. Responsible for energy coupling to the transport system. This Edwardsiella tarda protein is Phosphate import ATP-binding protein PstB.